The primary structure comprises 278 residues: MITGRTALYGVVGHPVAHSRSPEMQNAAFARLGVDAIYVALPVAPERIDEALRGAHALGFQGLNVTVPHKPRAASLCHALDPVATAVGAANTLRRTRDGWEGFNTDAPACRSLLEAAGVARGSRALLVGAGGAARAAAWALVQLGTELRVAARREEAAAELCRDLAAAVPGADLAAADFEDLEAEADAAAVVVNGTSVGLPGHEGRLPPLRFRADQVVLDFVYGDTDLARAARAAGARLVSGEQVLVRQGALAFTIWTGQPAPEADMARALEAREGAR.

Shikimate is bound by residues 19–21 (SRS) and T66. K70 (proton acceptor) is an active-site residue. 2 residues coordinate shikimate: N91 and D106. NADP(+) contacts are provided by residues 129–133 (GAGGA) and F221. Y223 serves as a coordination point for shikimate. NADP(+) is bound at residue G242.

This sequence belongs to the shikimate dehydrogenase family. In terms of assembly, homodimer.

It catalyses the reaction shikimate + NADP(+) = 3-dehydroshikimate + NADPH + H(+). It participates in metabolic intermediate biosynthesis; chorismate biosynthesis; chorismate from D-erythrose 4-phosphate and phosphoenolpyruvate: step 4/7. Its function is as follows. Involved in the biosynthesis of the chorismate, which leads to the biosynthesis of aromatic amino acids. Catalyzes the reversible NADPH linked reduction of 3-dehydroshikimate (DHSA) to yield shikimate (SA). In Anaeromyxobacter sp. (strain K), this protein is Shikimate dehydrogenase (NADP(+)).